The chain runs to 207 residues: High frequency lysogenization protein HflD homolog (207 aa).

This sequence belongs to the HflD family.

The protein localises to the cytoplasm. It localises to the cell inner membrane. This chain is High frequency lysogenization protein HflD homolog, found in Azotobacter vinelandii (strain DJ / ATCC BAA-1303).